The following is a 98-amino-acid chain: Lipolysis-activating peptide 1-alpha chain (98 aa).

Residues 1–22 (MMKFVLFGMIVILFSLMGSIRG) form the signal peptide. In terms of domain architecture, LCN-type CS-alpha/beta spans 26-89 (PGNYPTNAYG…IWNAVKNHCT (64 aa)). 3 disulfide bridges follow: Cys-40–Cys-63, Cys-49–Cys-68, and Cys-53–Cys-70. The residue at position 96 (Asn-96) is an Asparagine amide.

The protein belongs to the long (3 C-C) scorpion toxin superfamily. As to quaternary structure, monomer (edited version) and heterodimer (non-edited version) of this alpha chain and a beta chain (AC Q95P90). Expressed by the venom gland.

It is found in the secreted. Its function is as follows. The heterodimer non-edited LVP1 induces lipolysis in rat adipocytes. Induction of lipolysis by LVP1 appears to be mediated through the beta-2 adrenergic receptor pathway (ADRB2). In terms of biological role, the edited BmKBTx, similar to beta-toxins, may modulate voltage-gated sodium channels (Nav) and may block voltage-gated potassium channels (Kv). Seems to be a rare component in the venom. The polypeptide is Lipolysis-activating peptide 1-alpha chain (LVP1a) (Olivierus martensii (Manchurian scorpion)).